The primary structure comprises 152 residues: Protein-export protein SecB (152 aa).

Belongs to the SecB family. As to quaternary structure, homotetramer, a dimer of dimers. One homotetramer interacts with 1 SecA dimer.

It is found in the cytoplasm. One of the proteins required for the normal export of preproteins out of the cell cytoplasm. It is a molecular chaperone that binds to a subset of precursor proteins, maintaining them in a translocation-competent state. It also specifically binds to its receptor SecA. This chain is Protein-export protein SecB, found in Rickettsia bellii (strain RML369-C).